Reading from the N-terminus, the 148-residue chain is Large ribosomal subunit protein bL9 (148 aa).

Belongs to the bacterial ribosomal protein bL9 family.

Its function is as follows. Binds to the 23S rRNA. This chain is Large ribosomal subunit protein bL9, found in Desulfitobacterium hafniense (strain DSM 10664 / DCB-2).